A 292-amino-acid chain; its full sequence is Ribonuclease HIII (292 aa).

An RNase H type-2 domain is found at 76-292; the sequence is TNLIGTDEVG…TQKAMKIAQL (217 aa). Aspartate 82, glutamate 83, and aspartate 186 together coordinate a divalent metal cation.

It belongs to the RNase HII family. RnhC subfamily. It depends on Mn(2+) as a cofactor. Mg(2+) serves as cofactor.

The protein resides in the cytoplasm. The enzyme catalyses Endonucleolytic cleavage to 5'-phosphomonoester.. Endonuclease that specifically degrades the RNA of RNA-DNA hybrids. This chain is Ribonuclease HIII, found in Lactococcus lactis subsp. cremoris (strain SK11).